We begin with the raw amino-acid sequence, 747 residues long: Probable copper-transporting ATPase PacS (747 aa).

At 1 to 101 (MVNQQTLTLR…RQLAQRVWVS (101 aa)) the chain is on the cytoplasmic side. The HMA domain occupies 3–69 (NQQTLTLRGM…AIEAAGYHAF (67 aa)). The a metal cation site is built by C14 and C17. The chain crosses the membrane as a helical span at residues 102 to 122 (GLIASLLVIGSLPMMLGISIP). Residues 123 to 132 (GIPMWLHHPG) lie on the Extracellular side of the membrane. The chain crosses the membrane as a helical span at residues 133–151 (LQLGLTLPVLWAGRSFFIN). Residues 152 to 158 (AWKAFRQ) are Cytoplasmic-facing. Residues 159-179 (NTATMDTLVAVGTGAAFLYSL) form a helical membrane-spanning segment. The Extracellular portion of the chain corresponds to 180–199 (AVTLFPQWLTRQGLPPDVYY). Residues 200 to 220 (EAIAVIIALLLLGRSLEERAK) form a helical membrane-spanning segment. The Cytoplasmic segment spans residues 221–348 (GQTSAAIRQL…KAPIQRLADQ (128 aa)). The chain crosses the membrane as a helical span at residues 349–371 (VTGWFVPAVIAIAILTFVLWFNW). Residues 372–378 (IGNVTLA) lie on the Extracellular side of the membrane. Residues 379–396 (LITAVGVLIIACPCALGL) form a helical membrane-spanning segment. Topologically, residues 397-688 (ATPTSIMVGT…QLSRATMTNI (292 aa)) are cytoplasmic. Catalysis depends on D434, which acts as the 4-aspartylphosphate intermediate. 2 residues coordinate Mg(2+): D634 and D638. The helical transmembrane segment at 689–708 (RQNLFFAFIYNVAGIPIAAG) threads the bilayer. Topologically, residues 709–720 (ILYPLLGWLLSP) are extracellular. Residues 721 to 739 (MLAGAAMAFSSVSVVTNAL) traverse the membrane as a helical segment. Over 740–747 (RLRQFQPR) the chain is Cytoplasmic.

Belongs to the cation transport ATPase (P-type) (TC 3.A.3) family. Type IB subfamily.

It localises to the cell membrane. The enzyme catalyses Cu(+)(in) + ATP + H2O = Cu(+)(out) + ADP + phosphate + H(+). May play a role in the osmotic adaptation. This Synechococcus elongatus (strain ATCC 33912 / PCC 7942 / FACHB-805) (Anacystis nidulans R2) protein is Probable copper-transporting ATPase PacS (pacS).